Reading from the N-terminus, the 318-residue chain is Peroxisomal adenine nucleotide carrier 1 (318 aa).

Solcar repeat units lie at residues 5–94, 104–184, and 202–296; these read LESL…FKRL, IGTK…LKQR, and LSAF…ISAS. The next 6 helical transmembrane spans lie at 8–28, 104–124, 158–178, 201–221, 252–272, and 284–304; these read LAEA…LYPL, IGTK…AIAT, FDGL…YTVF, SLSA…ATCL, VLSV…FKGL, and ALLL…ILAL.

Belongs to the mitochondrial carrier (TC 2.A.29) family.

The protein localises to the peroxisome membrane. Functionally, peroxisomal adenine nucleotide transporter catalyzing the counterexchange of ATP with AMP. ATP is needed by reactions that generate acyl-CoA for peroxisomal fatty acid beta-oxidation during postgerminative growth. Required for the conversion of seed-reserved triacylglycerols into sucrose that is necessary for growth before the onset of photosynthesis. This is Peroxisomal adenine nucleotide carrier 1 (PNC1) from Glycine max (Soybean).